Here is a 587-residue protein sequence, read N- to C-terminus: Phosphatidylinositol-3-phosphatase SAC1 (587 aa).

The Cytoplasmic portion of the chain corresponds to 1 to 520 (MATAAYEQLK…SPLSVPRDWK (520 aa)). An SAC domain is found at 122–451 (LNHVLNVDGF…ANACAKQYAG (330 aa)). The interval 452–587 (TGALKTDFTR…PRLVQKEKID (136 aa)) is essential for phosphatidylinositol-4-phosphate phosphatase activity. Position 456 is an N6-acetyllysine (Lys456). The helical transmembrane segment at 521–541 (FLALPIIMVVAFSMCIICLLM) threads the bilayer. The Lumenal segment spans residues 542-548 (AGDTWTE). A helical transmembrane segment spans residues 549-569 (TLAYVLFWGVASIGTFFIILY). Topologically, residues 570 to 587 (NGKDFVDAPRLVQKEKID) are cytoplasmic.

Interacts with TMEM39A. Interacts with SEC23A and SEC24A; this interaction is reduced in the absence of TMEM39A. Interacts with PLEKHA3 and VAPA and/or VAPB to form a ternary complex.

It is found in the endoplasmic reticulum membrane. Its subcellular location is the golgi apparatus membrane. It catalyses the reaction a 1,2-diacyl-sn-glycero-3-phospho-(1D-myo-inositol-3-phosphate) + H2O = a 1,2-diacyl-sn-glycero-3-phospho-(1D-myo-inositol) + phosphate. The catalysed reaction is a 1,2-diacyl-sn-glycero-3-phospho-(1D-myo-inositol 4-phosphate) + H2O = a 1,2-diacyl-sn-glycero-3-phospho-(1D-myo-inositol) + phosphate. In terms of biological role, phosphoinositide phosphatase which catalyzes the hydrolysis of phosphatidylinositol 4-phosphate (PtdIns(4)P), phosphatidylinositol 3-phosphate (PtdIns(3)P) and has low activity towards phosphatidylinositol-3,5-bisphosphate (PtdIns(3,5)P2). Shows a very robust PtdIns(4)P phosphatase activity when it binds PtdIns(4)P in a 'cis' configuration in the cellular environment, with much less activity seen when it binds PtdIns(4)P in 'trans' configuration. PtdIns(4)P phosphatase activity (when it binds PtdIns(4)P in 'trans' configuration) is enhanced in the presence of PLEKHA3. The sequence is that of Phosphatidylinositol-3-phosphatase SAC1 (SACM1L) from Pongo abelii (Sumatran orangutan).